The chain runs to 748 residues: Disintegrin and metalloproteinase domain-containing protein 10 (748 aa).

Positions 1–19 are cleaved as a signal peptide; that stretch reads MVLLRVLILLLSWAAGMGG. A propeptide spanning residues 20-213 is cleaved from the precursor; it reads QYGNPLNKYI…NGPELLRKKR (194 aa). Over 20–672 the chain is Extracellular; sequence QYGNPLNKYI…SPELYENIAE (653 aa). The Cysteine switch motif lies at 171-178; it reads GGCADHSV. Residue C173 coordinates Zn(2+). The Peptidase M12B domain maps to 220-456; the sequence is NTCQLYIQTD…KRNNCFVESG (237 aa). 17 cysteine pairs are disulfide-bonded: C222/C313, C344/C451, C399/C435, C460/C495, C471/C484, C473/C479, C483/C515, C503/C511, C510/C536, C524/C543, C530/C562, C555/C567, C572/C598, C580/C607, C582/C597, C594/C639, and C632/C645. N-linked (GlcNAc...) asparagine glycans are attached at residues N267 and N278. H383 lines the Zn(2+) pocket. The active site involves E384. Zn(2+)-binding residues include H387 and H393. N-linked (GlcNAc...) asparagine glycosylation is present at N439. In terms of domain architecture, Disintegrin spans 457 to 551; it reads QPICGNGMVE…LCPASDPKPN (95 aa). N551 carries an N-linked (GlcNAc...) asparagine glycan. The chain crosses the membrane as a helical span at residues 673–693; that stretch reads WIVAHWWAVLLMGIALIMLMA. The Cytoplasmic segment spans residues 694–748; it reads GFIKICSVHTPSSNPKLPPPKPLPGTLKRRRPPQPIQQPQRQRPRESYQMGHMRR. Residues 704 to 748 form a disordered region; the sequence is PSSNPKLPPPKPLPGTLKRRRPPQPIQQPQRQRPRESYQMGHMRR. Residues 708 to 715 carry the SH3-binding motif; sequence PKLPPPKP. T719 bears the Phosphothreonine; by FAM20C mark. The short motif at 722-728 is the SH3-binding element; that stretch reads RRRPPQP. The interaction with AP2A1, AP2A2 and AP2M1 stretch occupies residues 734–748; it reads RQRPRESYQMGHMRR.

In terms of assembly, forms a ternary EFNA5-EPHA3-ADAM10 complex mediating EFNA5 extracellular domain shedding by ADAM10 which regulates the EFNA5-EPHA3 complex internalization and function, the cleavage occurs in trans, with ADAM10 and its substrate being on the membranes of opposing cells. Interacts with the clathrin adapter AP2 complex subunits AP2A1, AP2A2, AP2B1, and AP2M1; this interaction facilitates ADAM10 endocytosis from the plasma membrane during long-term potentiation in hippocampal neurons. Forms a ternary complex composed of ADAM10, EPHA4 and CADH1; within the complex, ADAM10 cleaves CADH1 which disrupts adherens junctions. Interacts with EPHA2. Interacts with NGF in a divalent cation-dependent manner. Interacts with TSPAN14; the interaction promotes ADAM10 maturation and cell surface expression. Interacts with TSPAN5, TSPAN10, TSPAN14, TSPAN15, TSPAN17 and TSPAN33; these interactions regulate ADAM10 substrate specificity, endocytosis and turnover. Interacts (via extracellular domain) with TSPAN33 (via extracellular domain) and (via cytoplasmic domain) with AFDN; interaction with TSPAN33 allows the docking of ADAM10 to zonula adherens through a PDZ11-dependent interaction between TSPAN33 and PLEKHA7 while interaction with AFDN locks ADAM10 at zonula adherens. Interacts with DLG1; this interaction recruits ADAM10 to the cell membrane during long-term depression in hippocampal neurons. Interacts (via extracellular domain) with BACE1 (via extracellular domain). Interacts with FAM171A1. (Microbial infection) Interacts with S.aureus hly; this interaction is necessary for toxin pore formation, disruption of focal adhesions and S.aureus hly-mediated cytotoxicity. Zn(2+) is required as a cofactor. The precursor is cleaved by furin and PCSK7. In terms of tissue distribution, expressed in the brain (at protein level). Expressed in spleen, lymph node, thymus, peripheral blood leukocyte, bone marrow, cartilage, chondrocytes and fetal liver.

The protein localises to the cell membrane. It is found in the golgi apparatus membrane. The protein resides in the cytoplasmic vesicle. It localises to the clathrin-coated vesicle. Its subcellular location is the cell projection. The protein localises to the axon. It is found in the dendrite. The protein resides in the cell junction. It localises to the adherens junction. Its subcellular location is the cytoplasm. It catalyses the reaction Endopeptidase of broad specificity.. Catalytically inactive when the propeptide is intact and associated with the mature enzyme. The disintegrin and cysteine-rich regions modulate access of substrates to exerts an inhibitory effect on the cleavage of ADAM10 substrates. Transmembrane metalloprotease which mediates the ectodomain shedding of a myriad of transmembrane proteins, including adhesion proteins, growth factor precursors and cytokines being essential for development and tissue homeostasis. Associates with six members of the tetraspanin superfamily TspanC8 which regulate its exit from the endoplasmic reticulum and its substrate selectivity. Cleaves the membrane-bound precursor of TNF-alpha at '76-Ala-|-Val-77' to its mature soluble form. Responsible for the proteolytical release of soluble JAM3 from endothelial cells surface. Responsible for the proteolytic release of several other cell-surface proteins, including heparin-binding epidermal growth-like factor, ephrin-A2, CD44, CDH2 and for constitutive and regulated alpha-secretase cleavage of amyloid precursor protein (APP). Contributes to the normal cleavage of the cellular prion protein. Involved in the cleavage of the adhesion molecule L1 at the cell surface and in released membrane vesicles, suggesting a vesicle-based protease activity. Also controls the proteolytic processing of Notch and mediates lateral inhibition during neurogenesis. Required for the development of type 1 transitional B cells into marginal zone B cells, probably by cleaving Notch. Responsible for the FasL ectodomain shedding and for the generation of the remnant ADAM10-processed FasL (FasL APL) transmembrane form. Also cleaves the ectodomain of the integral membrane proteins CORIN and ITM2B. Mediates the proteolytic cleavage of LAG3, leading to release the secreted form of LAG3. Mediates the proteolytic cleavage of IL6R and IL11RA, leading to the release of secreted forms of IL6R and IL11RA. Enhances the cleavage of CHL1 by BACE1. Cleaves NRCAM. Cleaves TREM2, resulting in shedding of the TREM2 ectodomain. Involved in the development and maturation of glomerular and coronary vasculature. During development of the cochlear organ of Corti, promotes pillar cell separation by forming a ternary complex with CADH1 and EPHA4 and cleaving CADH1 at adherens junctions. May regulate the EFNA5-EPHA3 signaling. Regulates leukocyte transmigration as a sheddase for the adherens junction protein VE-cadherin/CDH5 in endothelial cells. In terms of biological role, (Microbial infection) Promotes the cytotoxic activity of S.aureus hly by binding to the toxin at zonula adherens and promoting formation of toxin pores. This is Disintegrin and metalloproteinase domain-containing protein 10 from Homo sapiens (Human).